Here is a 191-residue protein sequence, read N- to C-terminus: Protein YceI (191 aa).

A signal peptide spans 1-22 (MKKNLLGFTLASLLFTTGSAVA).

The protein belongs to the UPF0312 family. Type 1 subfamily.

It localises to the periplasm. This chain is Protein YceI, found in Salmonella dublin (strain CT_02021853).